The chain runs to 197 residues: Beta-crystallin A2 (197 aa).

Residues M1–P11 are N-terminal arm. Beta/gamma crystallin 'Greek key' domains are found at residues A12–N52 and G53–L99. Residues C100–D105 are connecting peptide. Beta/gamma crystallin 'Greek key' domains lie at S106–S147 and G148–Q196.

The protein belongs to the beta/gamma-crystallin family. Homo/heterodimer, or complexes of higher-order. The structure of beta-crystallin oligomers seems to be stabilized through interactions between the N-terminal arms.

In terms of biological role, crystallins are the dominant structural components of the vertebrate eye lens. The sequence is that of Beta-crystallin A2 (CRYBA2) from Oryctolagus cuniculus (Rabbit).